We begin with the raw amino-acid sequence, 192 residues long: uncharacterized protein (192 aa).

The signal sequence occupies residues 1–18 (MNSKFILKYFILAFFLVS). Cys-19 is lipidated: N-palmitoyl cysteine. The S-diacylglycerol cysteine moiety is linked to residue Cys-19.

The protein resides in the cell membrane. This is an uncharacterized protein from Borreliella burgdorferi (strain ATCC 35210 / DSM 4680 / CIP 102532 / B31) (Borrelia burgdorferi).